Reading from the N-terminus, the 450-residue chain is tRNA modification GTPase MnmE (450 aa).

Residues arginine 20, glutamate 78, and lysine 117 each coordinate (6S)-5-formyl-5,6,7,8-tetrahydrofolate. Residues 211–372 (GLRMVIVGKP…LEESIYRETQ (162 aa)) enclose the TrmE-type G domain. A K(+)-binding site is contributed by asparagine 221. GTP contacts are provided by residues 221–226 (NVGKST), 240–246 (TDIPGTT), 265–268 (DTAG), 326–329 (NKVD), and 353–355 (SAL). Mg(2+) is bound at residue serine 225. K(+) is bound by residues threonine 240, isoleucine 242, and threonine 245. Position 246 (threonine 246) interacts with Mg(2+). Lysine 450 serves as a coordination point for (6S)-5-formyl-5,6,7,8-tetrahydrofolate.

It belongs to the TRAFAC class TrmE-Era-EngA-EngB-Septin-like GTPase superfamily. TrmE GTPase family. Homodimer. Heterotetramer of two MnmE and two MnmG subunits. Requires K(+) as cofactor.

It is found in the cytoplasm. Exhibits a very high intrinsic GTPase hydrolysis rate. Involved in the addition of a carboxymethylaminomethyl (cmnm) group at the wobble position (U34) of certain tRNAs, forming tRNA-cmnm(5)s(2)U34. The chain is tRNA modification GTPase MnmE from Thermotoga maritima (strain ATCC 43589 / DSM 3109 / JCM 10099 / NBRC 100826 / MSB8).